The primary structure comprises 335 residues: Large ribosomal subunit protein uL3 (335 aa).

Residues 1–20 (MATIHRPRRGSLAFSPRKRA) form a disordered region.

It belongs to the universal ribosomal protein uL3 family. Part of the 50S ribosomal subunit. Forms a cluster with proteins L14 and L24e.

Its function is as follows. One of the primary rRNA binding proteins, it binds directly near the 3'-end of the 23S rRNA, where it nucleates assembly of the 50S subunit. This is Large ribosomal subunit protein uL3 (rpl3) from Methanothrix harundinacea (strain 6Ac) (Methanosaeta harundinacea).